The following is a 175-amino-acid chain: MSERIILDEAAIQRTITRIAHEILEYNKGTKDLVLLGIKTRGAFLAHRIQDKINSIEQQLVPTGTIDITHFRDDVDKVVQQADQYAFDINVDINNKVVVIIDDVLYTGRTVRASLDAILLHTRPIKIGLAALVDRGHRELPIRADFVGKNIPTARDESVSVYLEEIDDRNAVVIE.

Residues 40–41 (TR), 102–110 (DDVLYTGRT), Arg135, and Val159 contribute to the substrate site. The PRPP-binding motif lies at 98-110 (VVIIDDVLYTGRT).

Belongs to the purine/pyrimidine phosphoribosyltransferase family. PyrR subfamily. Homodimer and homohexamer; in equilibrium.

It carries out the reaction UMP + diphosphate = 5-phospho-alpha-D-ribose 1-diphosphate + uracil. Functionally, regulates transcriptional attenuation of the pyrimidine nucleotide (pyr) operon by binding in a uridine-dependent manner to specific sites on pyr mRNA. This disrupts an antiterminator hairpin in the RNA and favors formation of a downstream transcription terminator, leading to a reduced expression of downstream genes. In terms of biological role, also displays a weak uracil phosphoribosyltransferase activity which is not physiologically significant. This is Bifunctional protein PyrR from Staphylococcus epidermidis (strain ATCC 12228 / FDA PCI 1200).